Consider the following 466-residue polypeptide: Ribulose bisphosphate carboxylase large chain (466 aa).

N6,N6,N6-trimethyllysine is present on Lys5. Residues Asn114 and Thr164 each coordinate substrate. The Proton acceptor role is filled by Lys166. Lys168 serves as a coordination point for substrate. Residues Lys192, Asp194, and Glu195 each coordinate Mg(2+). N6-carboxylysine is present on Lys192. His285 serves as the catalytic Proton acceptor. Positions 286, 318, and 370 each coordinate substrate.

The protein belongs to the RuBisCO large chain family. Type I subfamily. Heterohexadecamer of 8 large chains and 8 small chains; disulfide-linked. The disulfide link is formed within the large subunit homodimers. Mg(2+) is required as a cofactor. The disulfide bond which can form in the large chain dimeric partners within the hexadecamer appears to be associated with oxidative stress and protein turnover.

It localises to the plastid. Its subcellular location is the chloroplast. The enzyme catalyses 2 (2R)-3-phosphoglycerate + 2 H(+) = D-ribulose 1,5-bisphosphate + CO2 + H2O. The catalysed reaction is D-ribulose 1,5-bisphosphate + O2 = 2-phosphoglycolate + (2R)-3-phosphoglycerate + 2 H(+). Its function is as follows. RuBisCO catalyzes two reactions: the carboxylation of D-ribulose 1,5-bisphosphate, the primary event in carbon dioxide fixation, as well as the oxidative fragmentation of the pentose substrate in the photorespiration process. Both reactions occur simultaneously and in competition at the same active site. The chain is Ribulose bisphosphate carboxylase large chain from Cercidiphyllum japonicum (Katsura tree).